The chain runs to 596 residues: Elongation factor 4 (596 aa).

In terms of domain architecture, tr-type G spans 2–184 (KQIRNFSIIA…VIVAKIPPPE (183 aa)). GTP contacts are provided by residues 14–19 (DHGKST) and 131–134 (NKID).

Belongs to the TRAFAC class translation factor GTPase superfamily. Classic translation factor GTPase family. LepA subfamily.

The protein localises to the cell inner membrane. The enzyme catalyses GTP + H2O = GDP + phosphate + H(+). In terms of biological role, required for accurate and efficient protein synthesis under certain stress conditions. May act as a fidelity factor of the translation reaction, by catalyzing a one-codon backward translocation of tRNAs on improperly translocated ribosomes. Back-translocation proceeds from a post-translocation (POST) complex to a pre-translocation (PRE) complex, thus giving elongation factor G a second chance to translocate the tRNAs correctly. Binds to ribosomes in a GTP-dependent manner. This is Elongation factor 4 from Shewanella baltica (strain OS155 / ATCC BAA-1091).